A 517-amino-acid polypeptide reads, in one-letter code: Bifunctional purine biosynthesis protein PurH (517 aa).

The MGS-like domain maps to 1–146 (MKRLALLSTS…KNFAHLTVLC (146 aa)).

The protein belongs to the PurH family.

It carries out the reaction (6R)-10-formyltetrahydrofolate + 5-amino-1-(5-phospho-beta-D-ribosyl)imidazole-4-carboxamide = 5-formamido-1-(5-phospho-D-ribosyl)imidazole-4-carboxamide + (6S)-5,6,7,8-tetrahydrofolate. The enzyme catalyses IMP + H2O = 5-formamido-1-(5-phospho-D-ribosyl)imidazole-4-carboxamide. It participates in purine metabolism; IMP biosynthesis via de novo pathway; 5-formamido-1-(5-phospho-D-ribosyl)imidazole-4-carboxamide from 5-amino-1-(5-phospho-D-ribosyl)imidazole-4-carboxamide (10-formyl THF route): step 1/1. It functions in the pathway purine metabolism; IMP biosynthesis via de novo pathway; IMP from 5-formamido-1-(5-phospho-D-ribosyl)imidazole-4-carboxamide: step 1/1. This is Bifunctional purine biosynthesis protein PurH from Trichodesmium erythraeum (strain IMS101).